Consider the following 646-residue polypeptide: WW domain-containing adapter protein with coiled-coil (646 aa).

The tract at residues 1 to 138 is disordered; that stretch reads MVMYARKQQR…YDSADDWSEH (138 aa). A compositionally biased stretch (polar residues) spans 23–37; that stretch reads QPFQALKYSSKSHPS. Over residues 38–50 the composition is skewed to basic and acidic residues; the sequence is SGDHRHEKMRDAA. Serine 53 carries the post-translational modification Phosphoserine. Residues 61 to 75 show a composition bias toward polar residues; that stretch reads RSNSPENKYSDSTGH. The segment covering 103 to 122 has biased composition (low complexity); the sequence is NHSALHSSNSHSSNPSNNPS. In terms of domain architecture, WW spans 129–162; it reads YDSADDWSEHISSSGKKYYYNCRTEVSQWEKPKE. Phosphoserine is present on residues serine 131 and serine 142. Composition is skewed to basic and acidic residues over residues 158-174 and 182-191; these read EKPK…KEAN and PKDRDYRREV. Disordered regions lie at residues 158–352 and 428–541; these read EKPK…PQST and TQAQ…TATV. The segment covering 211-225 has biased composition (polar residues); it reads DASSLLPQNILSQTS. Residue serine 225 is modified to Phosphoserine. Positions 226 to 239 are enriched in basic and acidic residues; sequence RHNDKDYRLPRAET. Positions 252-267 are enriched in low complexity; sequence PVVHPTATPSTVPSSP. The segment covering 284–300 has biased composition (polar residues); the sequence is GASTLSKLPTPTASLPA. Residue threonine 293 is modified to Phosphothreonine. The residue at position 302 (lysine 302) is an N6-acetyllysine. Polar residues predominate over residues 316-331; the sequence is SHSCTTPSTSSASGLN. A compositionally biased stretch (low complexity) spans 332-351; it reads PTSAPPTSASAVPVSPVPQS. Residues 428–463 are compositionally biased toward polar residues; the sequence is TQAQPSNQSPMSLTSDASSPRSYVSPRISTPQTNTV. Serine 446 carries the phosphoserine modification. Threonine 471 bears the Phosphothreonine mark. Over residues 490 to 503 the composition is skewed to polar residues; sequence VSHSATQQPVTADK. Serine 511, serine 523, and serine 525 each carry phosphoserine. Positions 511-524 are enriched in low complexity; the sequence is SPRSLQRLSSQRSP. Residues 528 to 541 are compositionally biased toward polar residues; that stretch reads PNHTCSSNASTATV. Positions 617–643 form a coiled coil; it reads QATLREQRILFLRQQIKELEKLKNQNS.

In terms of assembly, interacts (via coiled coil domain) with RNF20, RNF40 and UBE2A. Interacts (via WW domain) with RNA polymerase II. Interacts with MTOR and other components of the MTOR pathway including RPTOR, RUVBL1, RUVBL2, TTI1 and TTI2. In terms of processing, phosphorylated on tyrosine residues.

The protein resides in the nucleus speckle. The protein localises to the nucleus. Acts as a linker between gene transcription and histone H2B monoubiquitination at 'Lys-120' (H2BK120ub1). Interacts with the RNA polymerase II transcriptional machinery via its WW domain and with RNF20-RNF40 via its coiled coil region, thereby linking and regulating H2BK120ub1 and gene transcription. Regulates the cell-cycle checkpoint activation in response to DNA damage. Positive regulator of amino acid starvation-induced autophagy. Also acts as a negative regulator of basal autophagy. Positively regulates MTOR activity by promoting, in an energy-dependent manner, the assembly of the TTT complex composed of TELO2, TTI1 and TTI2 and the RUVBL complex composed of RUVBL1 and RUVBL2 into the TTT-RUVBL complex. This leads to the dimerization of the mTORC1 complex and its subsequent activation. May negatively regulate the ubiquitin proteasome pathway. The sequence is that of WW domain-containing adapter protein with coiled-coil (Wac) from Mus musculus (Mouse).